A 2067-amino-acid chain; its full sequence is MSTVRSLGLHDSSAISFLIAEDLLPAEPSEELYSWTTSINNGPNGPVEDELVWTKSCVVWTRAGVIKRVFRLDFEKEDIKYALLTNFAVNNVKRTSDLSSLAIPQTTSQQSNRPSGSESLDGKESRRSSTSKHSSRAVVVVLKTQAHIFFLEGNSHVVPLPFEVDSVFATPRGLLFQRKVADESNTSSYPMVPPNSFMSFSQDFCASQFLDYTSGKVQRPSLSTIPAQSPSWKSRPNKRADLPRVFSLMDPHSEMGLVVTNQASRWLHTSLSGRPSGFDVLDPADEIVYVSPRDELAGTFRADPKSPLILVLTVNTITGLYTLWTARYRDNESIPSHRKKKRRDTGGTRSKRRSSHFGMATGTTTPGARPSAGRESFGPRGDNWNASVMSHSQYSTEGRPDDDEDDFASKLGQDFGEIGVPSKTSRRVSSMLARADLATSQDRITFSDLVTGSQSSTIHPGGLRQSIGAGSTRGSFGFNPRSSLPPGAGSIYSTTSSFVDPPVDKLLEELNNESLFEGIENMDLKESAAGLPEEVFLSKVESFSSKFSGSFLAPSKIKSSKRLKVVTLCPTDYASSHVGESTSMALYLVDQEAKSLTVVNIRVESVKKPAKDVVFLKRSKNKATSDERALLVQASGIQHVSGTLDVCKVVDGGLSRIITLSVNDAGATVLHLQMPWNDPIIIELPSKFMLHEMDALSSIMTVNTSREGSVNRVMADFSMTMTGLDHPAVDGKFDVVDSAKRRHKLQLCMEPTNPLVRRAFGVCRFALCGYFPDKVADGLLMGWWKTLKWLQEREVCENDLEWTALVVTLFAQAIPFIEGDQSGGTTRLTRRKRGLLRSSSGSYVDTESWESMLEQESGSAGVVASWMNTASWGWVVEQDAEDESTASYGRKPNKEPLSSSRSTCRKNTYLLRCATLTREFLRTPQGIAAVGCDGHLRKALSNSEHSIHTPLCTILVALHLLREEQKLSACDEEQSHKTLGLLAPVLAQLGGWLGWPSWNWAEDSYYGSEIASINRWQFENTRMAGPDLPAEPLPPPSIFAYLEKAWRGESCQFWTLLNLVNFDGHPRRGRLWQWCSTLTPRTLALEGFVSEMRHKLSVLERIQLLHRWGLTRSVIETFPAGISTPLYEAIIESQTHASTSWSSSFLGLIDRDDLNISSQSSTTRPPPPLSLNVSHDAIRDYHQISNSTLDIDAINSFEASAEADRFSVTRLIFREDKRFIEAARLLNQSKAPAAECHPEPEWTDSDLLEAQKEVVQLVTLRTLSIPTGRAMLAFSGRLPLLTEKLPIPSFSLQCVMKPSNVTISADRASFHEEKICWAFFHNGVSTGLAISKNSKGIDTSWILFNKPQELTNRHAGFLLALGLNGHLRSLAKWVAFKYLTPKHTMTSIGLLLGLSASYLGTMDTLVTRLLSVHVTRMLPMGAAELNLSPLTQTAGIMGIGLLYCNSQHRRMSEVMLSEIENADQEEGSATNDYLRNEGYRLAAGFALGFINLGKGKDLKGMRDMHIVERLLAVAVGTKNVDLAHVLDRATAGATIALAIIFMKTNDETLAQKVDIPDTTVRFDYVRPDLFLLRTLARHIIMWDRIQACDEWFIGSLPEVYRRRYRLTGVRRLKSNDMPFFNIIAGLCFALGLRFAGSPDPTVRDILLSYLDQFIRISRLPAPNYDARLARNSVRHCQDVVALSLAAVMAGTGDLALFRRLRSLHGRVDPDTPYGSHMAAHMAIGMLFLGGGSYTLGTSNLAVASLICSLYPIFPTTVLDNECHLQAFRHLWVLAAEPRCIVPRDLDSRRPISMPITVTDSDGVSGTLTAPCLLPDLNRIAKVEVLSPDYWPLVLDFDSNPGVREKFQQGDQSIYLRRKATYNPTGSSFFSSTLAGLSSAQDILPSASTSASNQGKGLSPSALPNVSALLSKESHRFTPKPAAQSIWDWIFQLDSLHGILDAREKELVLPSSFPARPRPSSTPHDAPWLRQSAVDSKLLAESIAQNVIQSATGRGGNPDEVRDRLWQLRLLFAWIDAGSSFPSESDEEKRDRQETGSMPSSGHWLRRDYVEDLRWKIWGVQARGSEGS.

Positions 100–118 are enriched in polar residues; sequence SLAIPQTTSQQSNRPSGSE. Disordered stretches follow at residues 100-132, 332-408, and 452-480; these read SLAIPQTTSQQSNRPSGSESLDGKESRRSSTSK, ESIP…DDFA, and GSQSSTIHPGGLRQSIGAGSTRGSFGFNP. The short motif at 336-347 is the Nuclear localization signal element; it reads SHRKKKRRDTGG. Residues 336-355 show a composition bias toward basic residues; sequence SHRKKKRRDTGGTRSKRRSS. Polar residues predominate over residues 384–396; the sequence is WNASVMSHSQYST. 4 PC repeats span residues 1434–1465, 1482–1520, 1532–1562, and 1625–1659; these read AGIMGIGLLYCNSQHRRMSEVMLSEIENADQE, AAGFALGFINLGKGKDLKGMRDMHIVERLLAVAVGTKNV, GATIALAIIFMKTNDETLAQKVDIPDTTVRF, and GLCFALGLRFAGSPDPTVRDILLSYLDQFIRISRL. The interval 2020–2042 is disordered; it reads FPSESDEEKRDRQETGSMPSSGH.

It belongs to the APC1 family.

In terms of biological role, negative regulator of mitosis in E.nidulans. This protein is part of a regulatory pathway that includes the nimA protein kinase. It is required to prevent premature entry into mitosis. Mutations to this protein both cause cells to enter mitosis and prevent them from leaving mitosis. The polypeptide is Negative regulator of mitosis (bimE) (Emericella nidulans (strain FGSC A4 / ATCC 38163 / CBS 112.46 / NRRL 194 / M139) (Aspergillus nidulans)).